A 298-amino-acid polypeptide reads, in one-letter code: N-acetylmuramic acid 6-phosphate etherase (298 aa).

The SIS domain occupies 55 to 218 (IHTQVSGGGR…STGLMIKSGK (164 aa)). The active-site Proton donor is E83. E114 is an active-site residue.

Belongs to the GCKR-like family. MurNAc-6-P etherase subfamily. As to quaternary structure, homodimer.

The enzyme catalyses N-acetyl-D-muramate 6-phosphate + H2O = N-acetyl-D-glucosamine 6-phosphate + (R)-lactate. The protein operates within amino-sugar metabolism; 1,6-anhydro-N-acetylmuramate degradation. It participates in amino-sugar metabolism; N-acetylmuramate degradation. It functions in the pathway cell wall biogenesis; peptidoglycan recycling. Specifically catalyzes the cleavage of the D-lactyl ether substituent of MurNAc 6-phosphate, producing GlcNAc 6-phosphate and D-lactate. Together with AnmK, is also required for the utilization of anhydro-N-acetylmuramic acid (anhMurNAc) either imported from the medium or derived from its own cell wall murein, and thus plays a role in cell wall recycling. The polypeptide is N-acetylmuramic acid 6-phosphate etherase (Escherichia coli O6:K15:H31 (strain 536 / UPEC)).